Here is a 930-residue protein sequence, read N- to C-terminus: Translation initiation factor IF-2 (930 aa).

The span at 50–67 (FKPAAAPKVEAKPAAPKV) shows a compositional bias: low complexity. Disordered regions lie at residues 50 to 196 (FKPA…RIDF) and 260 to 346 (EVVP…HELP). 2 stretches are compositionally biased toward basic and acidic residues: residues 68 to 90 (SAEK…EAKP) and 110 to 125 (FKAE…AERR). Low complexity predominate over residues 129–141 (KGNNRDQQQNGNR). Basic and acidic residues-rich tracts occupy residues 157 to 172 (RDNR…EQGQ) and 262 to 295 (VPEK…DGPR). A compositionally biased stretch (low complexity) spans 309 to 318 (NQKNSNWNNN). Basic and acidic residues predominate over residues 337 to 346 (VTERKFHELP). Positions 432–599 (ERPPVVTIMG…TVLLVAEIQE (168 aa)) constitute a tr-type G domain. Residues 441–448 (GHVDHGKT) are G1. 441–448 (GHVDHGKT) contacts GTP. The tract at residues 466–470 (GITQH) is G2. Residues 487–490 (DTPG) are G3. GTP-binding positions include 487 to 491 (DTPGH) and 541 to 544 (NKID). A G4 region spans residues 541-544 (NKID). The tract at residues 577-579 (SAK) is G5.

This sequence belongs to the TRAFAC class translation factor GTPase superfamily. Classic translation factor GTPase family. IF-2 subfamily.

It is found in the cytoplasm. One of the essential components for the initiation of protein synthesis. Protects formylmethionyl-tRNA from spontaneous hydrolysis and promotes its binding to the 30S ribosomal subunits. Also involved in the hydrolysis of GTP during the formation of the 70S ribosomal complex. The polypeptide is Translation initiation factor IF-2 (Streptococcus pneumoniae serotype 19F (strain G54)).